The sequence spans 180 residues: Probable DNA replication complex GINS protein PSF2 (180 aa).

Belongs to the GINS2/PSF2 family. In terms of assembly, component of the GINS complex which is a heterotetramer of gins1, gins2, gins3 and gins4.

It localises to the nucleus. Its function is as follows. Required for correct functioning of the GINS complex, a complex that plays an essential role in the initiation of DNA replication, and progression of DNA replication forks. GINS complex is a core component of CDC45-MCM-GINS (CMG) helicase, the molecular machine that unwinds template DNA during replication, and around which the replisome is built. This Caenorhabditis elegans protein is Probable DNA replication complex GINS protein PSF2 (psf-2).